The primary structure comprises 130 residues: Small ribosomal subunit protein uS11 (130 aa).

Belongs to the universal ribosomal protein uS11 family. Part of the 30S ribosomal subunit. Interacts with proteins S7 and S18. Binds to IF-3.

Functionally, located on the platform of the 30S subunit, it bridges several disparate RNA helices of the 16S rRNA. Forms part of the Shine-Dalgarno cleft in the 70S ribosome. In Prochlorococcus marinus subsp. pastoris (strain CCMP1986 / NIES-2087 / MED4), this protein is Small ribosomal subunit protein uS11.